Here is a 377-residue protein sequence, read N- to C-terminus: Peptide chain release factor 2 (377 aa).

An N5-methylglutamine modification is found at glutamine 257.

Belongs to the prokaryotic/mitochondrial release factor family. Methylated by PrmC. Methylation increases the termination efficiency of RF2.

It localises to the cytoplasm. Functionally, peptide chain release factor 2 directs the termination of translation in response to the peptide chain termination codons UGA and UAA. The sequence is that of Peptide chain release factor 2 from Lactiplantibacillus plantarum (strain ATCC BAA-793 / NCIMB 8826 / WCFS1) (Lactobacillus plantarum).